Here is a 329-residue protein sequence, read N- to C-terminus: CDP-diacylglycerol--glycerol-3-phosphate 3-phosphatidyltransferase 1, chloroplastic (329 aa).

The N-terminal 38 residues, 1–38 (MAFLKTLNPLLRRSPTPIPNPRSLLSLDAFLAASSPTA), are a transit peptide targeting the chloroplast. Helical transmembrane passes span 150–170 (PVIG…TLAL), 190–210 (VFGS…VAIA), 217–237 (LHPG…GGAV), and 300–320 (ITVL…GYGI).

The protein belongs to the CDP-alcohol phosphatidyltransferase class-I family. Mn(2+) serves as cofactor.

The protein localises to the plastid. Its subcellular location is the chloroplast membrane. It catalyses the reaction a CDP-1,2-diacyl-sn-glycerol + sn-glycerol 3-phosphate = a 1,2-diacyl-sn-glycero-3-phospho-(1'-sn-glycero-3'-phosphate) + CMP + H(+). It functions in the pathway phospholipid metabolism; phosphatidylglycerol biosynthesis; phosphatidylglycerol from CDP-diacylglycerol: step 1/2. Catalyzes the committed step to the synthesis of the acidic phospholipids. Transfers specifically a phosphatidyl group from CDP-diacylglycerol to glycerol-3-phosphate to form phosphatidylglycerophosphate. The protein is CDP-diacylglycerol--glycerol-3-phosphate 3-phosphatidyltransferase 1, chloroplastic of Oryza sativa subsp. japonica (Rice).